Consider the following 101-residue polypeptide: Urease subunit beta (101 aa).

This sequence belongs to the urease beta subunit family. As to quaternary structure, heterotrimer of UreA (gamma), UreB (beta) and UreC (alpha) subunits. Three heterotrimers associate to form the active enzyme.

It localises to the cytoplasm. It carries out the reaction urea + 2 H2O + H(+) = hydrogencarbonate + 2 NH4(+). It functions in the pathway nitrogen metabolism; urea degradation; CO(2) and NH(3) from urea (urease route): step 1/1. The sequence is that of Urease subunit beta from Ruegeria sp. (strain TM1040) (Silicibacter sp.).